We begin with the raw amino-acid sequence, 373 residues long: Thyroid hormone receptor beta-A (373 aa).

The segment at 1–18 is modulating; the sequence is MPSSMSGYIPSYLDKDEL. 2 consecutive NR C4-type zinc fingers follow at residues 19–39 and 57–81; these read CVVC…CEGC and CKYE…FKKC. The nuclear receptor DNA-binding region spans 19-93; sequence CVVCGDKATG…VGMATDLVLD (75 aa). Residues 129–373 enclose the NR LBD domain; sequence EEWELIQVVT…PPLFLEVFED (245 aa).

This sequence belongs to the nuclear hormone receptor family. NR1 subfamily.

The protein localises to the nucleus. High affinity receptor for triiodothyronine (T3). The protein is Thyroid hormone receptor beta-A (thrb-a) of Xenopus laevis (African clawed frog).